The following is an 828-amino-acid chain: Periplasmic nitrate reductase 1 (828 aa).

The tat-type signal signal peptide spans 1–30; the sequence is MKMTRRAFVKANAAASAAAVAGITLPASAA. The region spanning 41 to 97 is the 4Fe-4S Mo/W bis-MGD-type domain; that stretch reads IKWDKAPCRFCGTGCSVLVGTQNGRVVATQGDPEAPVNKGLNCIKGYFLSKIMYGKD. Residues cysteine 48, cysteine 51, cysteine 55, and cysteine 83 each contribute to the [4Fe-4S] cluster site. Mo-bis(molybdopterin guanine dinucleotide) contacts are provided by residues lysine 85, glutamine 152, asparagine 177, cysteine 181, 214–221, 245–249, 264–266, methionine 374, glutamine 378, asparagine 484, 510–511, lysine 533, aspartate 560, and 718–727; these read WGSNMAEM, STYYH, QTD, SD, and TGRVLEHWHT. Residue phenylalanine 794 coordinates substrate. Mo-bis(molybdopterin guanine dinucleotide)-binding residues include asparagine 802 and lysine 819.

This sequence belongs to the prokaryotic molybdopterin-containing oxidoreductase family. NasA/NapA/NarB subfamily. Component of the periplasmic nitrate reductase NapAB complex composed of NapA and NapB. It depends on [4Fe-4S] cluster as a cofactor. Mo-bis(molybdopterin guanine dinucleotide) serves as cofactor. In terms of processing, predicted to be exported by the Tat system. The position of the signal peptide cleavage has not been experimentally proven.

It localises to the periplasm. It catalyses the reaction 2 Fe(II)-[cytochrome] + nitrate + 2 H(+) = 2 Fe(III)-[cytochrome] + nitrite + H2O. Catalytic subunit of the periplasmic nitrate reductase complex NapAB. Receives electrons from NapB and catalyzes the reduction of nitrate to nitrite. The protein is Periplasmic nitrate reductase 1 of Photobacterium profundum (strain SS9).